The primary structure comprises 241 residues: Proteasome subunit alpha type-5 (241 aa).

It belongs to the peptidase T1A family. As to quaternary structure, the 26S proteasome consists of a 20S proteasome core and two 19S regulatory subunits. The 20S proteasome core is composed of 28 subunits that are arranged in four stacked rings, resulting in a barrel-shaped structure. The two end rings are each formed by seven alpha subunits, and the two central rings are each formed by seven beta subunits. The catalytic chamber with the active sites is on the inside of the barrel.

It is found in the cytoplasm. The protein resides in the nucleus. Functionally, the proteasome is a multicatalytic proteinase complex which is characterized by its ability to cleave peptides with Arg, Phe, Tyr, Leu, and Glu adjacent to the leaving group at neutral or slightly basic pH. The proteasome has an ATP-dependent proteolytic activity. The polypeptide is Proteasome subunit alpha type-5 (psmA5) (Dictyostelium discoideum (Social amoeba)).